The following is a 132-amino-acid chain: Fluoride-specific ion channel FluC 1 (132 aa).

A run of 4 helical transmembrane segments spans residues 11–31 (AVFA…ALAI), 37–57 (WPWP…YFTT), 70–92 (RPLL…VETI), and 105–125 (AYSV…TVLV). Glycine 79 and threonine 82 together coordinate Na(+).

The protein belongs to the fluoride channel Fluc/FEX (TC 1.A.43) family.

The protein localises to the cell membrane. The catalysed reaction is fluoride(in) = fluoride(out). With respect to regulation, na(+) is not transported, but it plays an essential structural role and its presence is essential for fluoride channel function. Its function is as follows. Fluoride-specific ion channel. Important for reducing fluoride concentration in the cell, thus reducing its toxicity. The sequence is that of Fluoride-specific ion channel FluC 1 from Mycobacterium bovis (strain ATCC BAA-935 / AF2122/97).